The primary structure comprises 876 residues: Leucine--tRNA ligase (876 aa).

A 'HIGH' region motif is present at residues P42–H52. The 'KMSKS' region motif lies at K634 to S638. K637 is an ATP binding site.

It belongs to the class-I aminoacyl-tRNA synthetase family.

It is found in the cytoplasm. It carries out the reaction tRNA(Leu) + L-leucine + ATP = L-leucyl-tRNA(Leu) + AMP + diphosphate. The protein is Leucine--tRNA ligase of Neisseria gonorrhoeae (strain NCCP11945).